Here is a 190-residue protein sequence, read N- to C-terminus: Glycerol-3-phosphate acyltransferase 2 (190 aa).

The next 5 helical transmembrane spans lie at Met1–Val21, Val53–Leu73, Thr76–Ala96, Val110–Leu130, and Leu152–Ile172.

Belongs to the PlsY family. As to quaternary structure, probably interacts with PlsX.

The protein resides in the cell membrane. The catalysed reaction is an acyl phosphate + sn-glycerol 3-phosphate = a 1-acyl-sn-glycero-3-phosphate + phosphate. It participates in lipid metabolism; phospholipid metabolism. Functionally, catalyzes the transfer of an acyl group from acyl-phosphate (acyl-PO(4)) to glycerol-3-phosphate (G3P) to form lysophosphatidic acid (LPA). This enzyme utilizes acyl-phosphate as fatty acyl donor, but not acyl-CoA or acyl-ACP. In Bacillus anthracis, this protein is Glycerol-3-phosphate acyltransferase 2.